The following is a 488-amino-acid chain: Calcium uniporter protein, mitochondrial (488 aa).

The transit peptide at 1-74 (MRALVSRTPI…RSFQLSASSR (74 aa)) directs the protein to the mitochondrion. A disordered region spans residues 65–117 (RSFQLSASSRDKRGPQSAEPDPLERLEVKKVQQQHENEKDDSGRDTKSGGKVA). Residues 75–339 (DKRGPQSAEP…ECDALAHRGA (265 aa)) lie on the Mitochondrial matrix side of the membrane. Residues 86–112 (PLERLEVKKVQQQHENEKDDSGRDTKS) show a composition bias toward basic and acidic residues. A helical transmembrane segment spans residues 340-361 (QRVALGGFGILAFWWYIVYKLT). The Mitochondrial intermembrane portion of the chain corresponds to 362 to 370 (FETDLGWDT). Positions 368-376 (WDTMEPVTY) match the Selectivity filter motif. Residues 371 to 391 (MEPVTYLVSLSTLMGGYLWFL) form a helical membrane-spanning segment. Glu372 lines the Ca(2+) pocket. The Mitochondrial matrix segment spans residues 392–488 (YHNREISYRS…ERPKDDRDDD (97 aa)). Residues 464 to 488 (ALKKERRLKNGSQKEERPKDDRDDD) are disordered. Basic and acidic residues predominate over residues 475–488 (SQKEERPKDDRDDD).

This sequence belongs to the MCU (TC 1.A.77) family. In terms of assembly, homotetramer, assembles in a dimer or dimers configuration with two interfaces.

It is found in the mitochondrion inner membrane. The catalysed reaction is Ca(2+)(in) = Ca(2+)(out). With respect to regulation, inhibited by ruthenium red or its derivative Ru360. Its function is as follows. Highly selective calcium channel localized to the inner mitochondrial membrane, which mediates calcium uptake into the mitochondrial matrix. Mitochondrial calcium homeostasis plays key roles in cellular physiology and regulates ATP production, cytoplasmic calcium signals and activation of cell death pathways. Sufficient to operate as a pore-forming channel without the need of calcium-sensor or auxiliary subunit. This is Calcium uniporter protein, mitochondrial from Neosartorya fischeri (strain ATCC 1020 / DSM 3700 / CBS 544.65 / FGSC A1164 / JCM 1740 / NRRL 181 / WB 181) (Aspergillus fischerianus).